The chain runs to 122 residues: Large ribosomal subunit protein uL14 (122 aa).

Belongs to the universal ribosomal protein uL14 family. In terms of assembly, part of the 50S ribosomal subunit. Forms a cluster with proteins L3 and L19. In the 70S ribosome, L14 and L19 interact and together make contacts with the 16S rRNA in bridges B5 and B8.

In terms of biological role, binds to 23S rRNA. Forms part of two intersubunit bridges in the 70S ribosome. The polypeptide is Large ribosomal subunit protein uL14 (Heliobacterium modesticaldum (strain ATCC 51547 / Ice1)).